Consider the following 187-residue polypeptide: UPF0398 protein LJ_1195 (187 aa).

It belongs to the UPF0398 family.

This is UPF0398 protein LJ_1195 from Lactobacillus johnsonii (strain CNCM I-12250 / La1 / NCC 533).